The sequence spans 215 residues: UPF0056 membrane protein YhcE (215 aa).

6 helical membrane passes run 14–34, 54–74, 81–101, 120–140, 147–167, and 189–209; these read FFIG…FISM, VAII…LFGI, IAGG…KLGE, VVPL…TIVW, ISYL…CWGL, and IMGL…IKGI.

Belongs to the UPF0056 (MarC) family.

It localises to the cell membrane. This chain is UPF0056 membrane protein YhcE (ychE), found in Escherichia coli (strain K12).